The sequence spans 31 residues: leu operon leader peptide (31 aa).

Functionally, involved in control of the biosynthesis of leucine. This chain is leu operon leader peptide (leuL), found in Buchnera aphidicola subsp. Rhopalosiphum padi.